Consider the following 356-residue polypeptide: Protein MGF 360-3L (356 aa).

One copy of the ANK repeat lies at 61–93 (KLNTALVLAVKENNEDLIMLFTEWGANINYGLL).

It belongs to the asfivirus MGF 360 family.

Plays a role in virus cell tropism, and may be required for efficient virus replication in macrophages. The chain is Protein MGF 360-3L from African swine fever virus (strain Badajoz 1971 Vero-adapted) (Ba71V).